We begin with the raw amino-acid sequence, 854 residues long: DNA mismatch repair protein MutS (854 aa).

Positions 1-21 (MTASDIQPTEPHTPPTPHADT) are disordered. Residue 658 to 665 (GPNASGKS) participates in ATP binding.

The protein belongs to the DNA mismatch repair MutS family.

Its function is as follows. This protein is involved in the repair of mismatches in DNA. It is possible that it carries out the mismatch recognition step. This protein has a weak ATPase activity. This chain is DNA mismatch repair protein MutS, found in Trichormus variabilis (strain ATCC 29413 / PCC 7937) (Anabaena variabilis).